We begin with the raw amino-acid sequence, 198 residues long: Altered inheritance of mitochondria protein 34, mitochondrial (198 aa).

A mitochondrion-targeting transit peptide spans 1-55; sequence MSISLFGRIVSQQFSGIRAAGPGRSLYLPFTLLLKQPGAYKVSLHRYVHSTQTKS. In terms of domain architecture, SAP spans 69-103; it reads FQKFTVKVLKEQCKSRGLKLSGRKSDLLQRLITHD. Residues 172 to 187 traverse the membrane as a helical segment; it reads IFLLGFFMLSCLWWNL.

The protein belongs to the AIM34 family.

The protein localises to the mitochondrion membrane. The chain is Altered inheritance of mitochondria protein 34, mitochondrial (AIM34) from Saccharomyces cerevisiae (strain JAY291) (Baker's yeast).